A 1407-amino-acid polypeptide reads, in one-letter code: Probable phosphoribosylformylglycinamidine synthase, chloroplastic/mitochondrial (1407 aa).

A chloroplast and mitochondrion-targeting transit peptide spans 1 to 53; the sequence is MNTSQATRAALFLNGSNRQAMLLQRSSMSQLWGSVRMRTSRLSLNRTKAVSLR. ATP-binding positions include 407 to 418, 487 to 489, and alanine 786; these read GAETGAGGRIRD and QGY. 4 residues coordinate Mg(2+): aspartate 787, glutamate 826, asparagine 830, and aspartate 989. Serine 991 contributes to the ATP binding site. The region spanning 1141-1381 is the Glutamine amidotransferase type-1 domain; that stretch reads KVAVIREEGS…LMWQFPWYPT (241 aa). Cysteine 1235 (nucleophile) is an active-site residue. Active-site residues include histidine 1366 and glutamate 1368.

It in the N-terminal section; belongs to the FGAMS family.

It is found in the plastid. It localises to the chloroplast. The protein localises to the mitochondrion. It carries out the reaction N(2)-formyl-N(1)-(5-phospho-beta-D-ribosyl)glycinamide + L-glutamine + ATP + H2O = 2-formamido-N(1)-(5-O-phospho-beta-D-ribosyl)acetamidine + L-glutamate + ADP + phosphate + H(+). Its pathway is purine metabolism; IMP biosynthesis via de novo pathway; 5-amino-1-(5-phospho-D-ribosyl)imidazole from N(2)-formyl-N(1)-(5-phospho-D-ribosyl)glycinamide: step 1/2. In terms of biological role, essential to the male gametophyte development. Phosphoribosylformylglycinamidine synthase involved in the purines biosynthetic pathway. Catalyzes the ATP-dependent conversion of formylglycinamide ribonucleotide (FGAR) and glutamine to yield formylglycinamidine ribonucleotide (FGAM) and glutamate. The chain is Probable phosphoribosylformylglycinamidine synthase, chloroplastic/mitochondrial from Arabidopsis thaliana (Mouse-ear cress).